A 191-amino-acid polypeptide reads, in one-letter code: MEKYIILILSYVIGSIPFSLIIAKINGINLREVGSGNIGATNVARTGNKRLAVLALFLDSLKGFVAVYTAQQFCDNNDLYIYVSAILAVLGHMFPIWLRFNGGKGVATTLGVLIALNISIALAFVFVWLIVFFIFRYSSLASLAATAAAVIASFFFQKELFLILLTVAILIFLKHYKNIANLLQGRERKFL.

5 consecutive transmembrane segments (helical) span residues 5-25, 51-71, 78-98, 114-134, and 153-173; these read IILI…IAKI, LAVL…YTAQ, DLYI…PIWL, IALN…VFFI, and SFFF…LIFL.

It belongs to the PlsY family. As to quaternary structure, probably interacts with PlsX.

It is found in the cell membrane. The enzyme catalyses an acyl phosphate + sn-glycerol 3-phosphate = a 1-acyl-sn-glycero-3-phosphate + phosphate. It functions in the pathway lipid metabolism; phospholipid metabolism. Functionally, catalyzes the transfer of an acyl group from acyl-phosphate (acyl-PO(4)) to glycerol-3-phosphate (G3P) to form lysophosphatidic acid (LPA). This enzyme utilizes acyl-phosphate as fatty acyl donor, but not acyl-CoA or acyl-ACP. This chain is Glycerol-3-phosphate acyltransferase, found in Wolbachia pipientis subsp. Culex pipiens (strain wPip).